A 212-amino-acid polypeptide reads, in one-letter code: Nitric oxide synthase (212 aa).

Tyr-11 contributes to the heme b binding site. The calmodulin-binding stretch occupies residues 30–50 (KKRAIGFKKLAKAVKFSTKLM). The region spanning 60-212 (ATILYATETG…AVDTLLEELG (153 aa)) is the Flavodoxin-like domain. The disordered stretch occupies residues 155–175 (SYSDSRKSSSDEPEHKDNFES). Over residues 158–173 (DSRKSSSDEPEHKDNF) the composition is skewed to basic and acidic residues. FMN is bound at residue 186-212 (AFGLGSRAYPHFCAFARAVDTLLEELG).

It belongs to the NOS family. Heme b is required as a cofactor. It depends on FAD as a cofactor. FMN serves as cofactor.

The catalysed reaction is 2 L-arginine + 3 NADPH + 4 O2 + H(+) = 2 L-citrulline + 2 nitric oxide + 3 NADP(+) + 4 H2O. Produces nitric oxide (NO) which is a messenger molecule with diverse functions throughout the body. The chain is Nitric oxide synthase from Squalus acanthias (Spiny dogfish).